The sequence spans 346 residues: Phosphoribosylformylglycinamidine cyclo-ligase (346 aa).

Belongs to the AIR synthase family.

It localises to the cytoplasm. The enzyme catalyses 2-formamido-N(1)-(5-O-phospho-beta-D-ribosyl)acetamidine + ATP = 5-amino-1-(5-phospho-beta-D-ribosyl)imidazole + ADP + phosphate + H(+). Its pathway is purine metabolism; IMP biosynthesis via de novo pathway; 5-amino-1-(5-phospho-D-ribosyl)imidazole from N(2)-formyl-N(1)-(5-phospho-D-ribosyl)glycinamide: step 2/2. The protein is Phosphoribosylformylglycinamidine cyclo-ligase of Geobacillus kaustophilus (strain HTA426).